The following is a 312-amino-acid chain: Pyridoxal kinase (312 aa).

Position 1 is an N-acetylmethionine (Met-1). Pyridoxal 5'-phosphate contacts are provided by Ser-12 and Thr-47. The pyridoxamine site is built by Ser-12 and Thr-47. Ser-59 is modified (phosphoserine). Asp-113 is a binding site for K(+). Tyr-127 contributes to the pyridoxal 5'-phosphate binding site. Residue Thr-148 coordinates K(+). An ADP-binding site is contributed by Asn-150. Asn-150 is an ATP binding site. A Phosphoserine modification is found at Ser-164. Thr-186 contacts K(+). Thr-186 to Ser-187 contacts ADP. Thr-186–Ser-187 is an ATP binding site. Ser-213 is subject to Phosphoserine. Residues Met-223–Val-226 and Thr-233–Gly-234 contribute to the ADP site. Residues Met-223–Val-226 and Thr-233–Gly-234 each bind ATP. Gly-232–Asp-235 contacts pyridoxal 5'-phosphate. Residue Asp-235 participates in pyridoxamine binding. The active-site Proton acceptor is the Asp-235. The residue at position 285 (Ser-285) is a Phosphoserine.

Belongs to the pyridoxine kinase family. As to quaternary structure, homodimer. Requires Zn(2+) as cofactor. It depends on Mg(2+) as a cofactor. In terms of tissue distribution, ubiquitous.

It is found in the cytoplasm. The protein localises to the cytosol. It carries out the reaction pyridoxal + ATP = pyridoxal 5'-phosphate + ADP + H(+). The enzyme catalyses pyridoxamine + ATP = pyridoxamine 5'-phosphate + ADP + H(+). It catalyses the reaction pyridoxine + ATP = pyridoxine 5'-phosphate + ADP + H(+). The protein operates within cofactor metabolism; pyridoxal 5'-phosphate salvage; pyridoxal 5'-phosphate from pyridoxal: step 1/1. It functions in the pathway cofactor metabolism; pyridoxal 5'-phosphate salvage; pyridoxine 5'-phosphate from pyridoxine: step 1/1. It participates in cofactor metabolism; pyridoxal 5'-phosphate salvage; pyridoxamine 5'-phosphate from pyridoxamine: step 1/1. With respect to regulation, activated by K(+). Activity is increased in the presence of Na(+). In terms of biological role, catalyzes the phosphorylation of the dietary vitamin B6 vitamers pyridoxal (PL), pyridoxine (PN) and pyridoxamine (PM) to form pyridoxal 5'-phosphate (PLP), pyridoxine 5'-phosphate (PNP) and pyridoxamine 5'-phosphate (PMP), respectively. PLP is the active form of vitamin B6, and acts as a cofactor for over 140 different enzymatic reactions. The chain is Pyridoxal kinase (PDXK) from Ovis aries (Sheep).